Consider the following 138-residue polypeptide: Basic phospholipase A2 homolog 7 (138 aa).

Positions 1-16 (MRTLWLMAVLLVGVEG) are cleaved as a signal peptide. Cystine bridges form between Cys42-Cys131, Cys44-Cys60, Cys59-Cys111, Cys65-Cys138, Cys66-Cys104, and Cys91-Cys102. The tract at residues 121 to 133 (KKKKINLKLFCKK) is important for membrane-damaging activities in eukaryotes and bacteria; heparin-binding.

The protein belongs to the phospholipase A2 family. Group II subfamily. K49 sub-subfamily. Expressed by the venom gland.

It localises to the secreted. Functionally, snake venom phospholipase A2 homolog that lacks enzymatic activity. Is myotoxic and displays edema-inducing activities. A model of myotoxic mechanism has been proposed: an apo Lys49-PLA2 is activated by the entrance of a hydrophobic molecule (e.g. fatty acid) at the hydrophobic channel of the protein leading to a reorientation of a monomer. This reorientation causes a transition between 'inactive' to 'active' states, causing alignment of C-terminal and membrane-docking sites (MDoS) side-by-side and putting the membrane-disruption sites (MDiS) in the same plane, exposed to solvent and in a symmetric position for both monomers. The MDoS region stabilizes the toxin on membrane by the interaction of charged residues with phospholipid head groups. Subsequently, the MDiS region destabilizes the membrane with penetration of hydrophobic residues. This insertion causes a disorganization of the membrane, allowing an uncontrolled influx of ions (i.e. calcium and sodium), and eventually triggering irreversible intracellular alterations and cell death. This is Basic phospholipase A2 homolog 7 from Craspedocephalus gramineus (Bamboo pit viper).